A 365-amino-acid chain; its full sequence is MKTLQTSPKKDGYRMPGEFEAHKDVYLLWPERPDNWREGAKPAQATFAKVAETIAQFESVTVGVSDRQYTNARHMLADNIQVVEMSNNDSWIRDCGPTFVVNDKGDSRGVDWTFNAWGGLVDGLYFPWDKDDRVAQKVCEIEGRDRYRLDDLVLEGGSTHVDGEGTLLVTEECLLSDGRNPQLSKEQIESILKEYLNVEKIIWLKKGIYLDETNGHVDNIANFVKPGQVVLAWTDDQSDPQYAISKENYDMLINETDAKGRKLQVEKLYLPKPILITEAESQGVDTVDGTLPRLAGDRLAASYVNYYTANGGIVFPLFNDPMDEKAQEILQKLYPDRKIVGVPAREILLGGGNIHCITQQIPAGR.

Residue Cys-356 is the Amidino-cysteine intermediate of the active site.

Belongs to the agmatine deiminase family.

It catalyses the reaction agmatine + H2O = N-carbamoylputrescine + NH4(+). The protein is Putative agmatine deiminase of Latilactobacillus sakei subsp. sakei (strain 23K) (Lactobacillus sakei subsp. sakei).